We begin with the raw amino-acid sequence, 140 residues long: ATP synthase epsilon chain (140 aa).

It belongs to the ATPase epsilon chain family. As to quaternary structure, F-type ATPases have 2 components, CF(1) - the catalytic core - and CF(0) - the membrane proton channel. CF(1) has five subunits: alpha(3), beta(3), gamma(1), delta(1), epsilon(1). CF(0) has three main subunits: a, b and c.

It is found in the cell inner membrane. Produces ATP from ADP in the presence of a proton gradient across the membrane. In Bdellovibrio bacteriovorus (strain ATCC 15356 / DSM 50701 / NCIMB 9529 / HD100), this protein is ATP synthase epsilon chain.